The chain runs to 61 residues: uncharacterized protein (61 aa).

This is an uncharacterized protein from Bacillus subtilis (strain 168).